Reading from the N-terminus, the 125-residue chain is Ribosome-binding factor A (125 aa).

This sequence belongs to the RbfA family. Monomer. Binds 30S ribosomal subunits, but not 50S ribosomal subunits or 70S ribosomes.

It is found in the cytoplasm. One of several proteins that assist in the late maturation steps of the functional core of the 30S ribosomal subunit. Associates with free 30S ribosomal subunits (but not with 30S subunits that are part of 70S ribosomes or polysomes). Required for efficient processing of 16S rRNA. May interact with the 5'-terminal helix region of 16S rRNA. The chain is Ribosome-binding factor A from Acidovorax sp. (strain JS42).